We begin with the raw amino-acid sequence, 190 residues long: Putative acetyltransferase DDB_G0275913 (190 aa).

Belongs to the transferase hexapeptide repeat family.

This is Putative acetyltransferase DDB_G0275913 from Dictyostelium discoideum (Social amoeba).